Consider the following 625-residue polypeptide: Adenine deaminase 2 (625 aa).

Belongs to the metallo-dependent hydrolases superfamily. Adenine deaminase family. Mn(2+) is required as a cofactor.

The catalysed reaction is adenine + H2O + H(+) = hypoxanthine + NH4(+). The polypeptide is Adenine deaminase 2 (Bradyrhizobium diazoefficiens (strain JCM 10833 / BCRC 13528 / IAM 13628 / NBRC 14792 / USDA 110)).